Reading from the N-terminus, the 388-residue chain is (S)-8-oxocitronellyl enol synthase (388 aa).

NADP(+) contacts are provided by residues 38 to 40 (TGI), 66 to 67 (RR), 84 to 85 (DV), 108 to 109 (SW), and Gln142. Active-site residues include Lys146 and Tyr178. Substrate is bound by residues Lys146 and Tyr178. NADP(+)-binding positions include Tyr178, Val204, and 211–213 (SMM). Ser349 is a substrate binding site.

This sequence belongs to the short-chain dehydrogenases/reductases (SDR) family. Highly divergent. In terms of assembly, homodimer. Expressed in internal phloem-associated parenchyma (IPAP) cells.

It localises to the cytoplasm. The protein resides in the cytosol. The catalysed reaction is (S)-8-oxocitronellyl enol + NADP(+) = (6E)-8-oxogeranial + NADPH + H(+). It catalyses the reaction (S)-8-oxocitronellyl enol + NAD(+) = (6E)-8-oxogeranial + NADH + H(+). Functionally, iridoid synthase that catalyzes the first step in generation of the iridoid ring scaffold using the linear monoterpene (6E)-8-oxogeranial as substrate. Iridoids comprise a large family of distinctive bicyclic monoterpenes that possess a wide range of pharmacological activities, including anticancer, anti-inflammatory, antifungal and antibacterial activities. This Catharanthus roseus (Madagascar periwinkle) protein is (S)-8-oxocitronellyl enol synthase.